Here is a 433-residue protein sequence, read N- to C-terminus: 23S rRNA (uracil(1939)-C(5))-methyltransferase RlmD (433 aa).

A TRAM domain is found at 10 to 68 (RTTTRQIITVSVNDLDSFGQGVARHNGKTLFIPGLLPQENAEVAVTEDKKQYARAKVVR). Residues Cys-81, Cys-87, Cys-90, and Cys-162 each contribute to the [4Fe-4S] cluster site. S-adenosyl-L-methionine-binding residues include Gln-265, Phe-294, Asn-299, Glu-315, Asn-342, and Asp-363. Cys-389 serves as the catalytic Nucleophile.

Belongs to the class I-like SAM-binding methyltransferase superfamily. RNA M5U methyltransferase family. RlmD subfamily.

It catalyses the reaction uridine(1939) in 23S rRNA + S-adenosyl-L-methionine = 5-methyluridine(1939) in 23S rRNA + S-adenosyl-L-homocysteine + H(+). Catalyzes the formation of 5-methyl-uridine at position 1939 (m5U1939) in 23S rRNA. This Shigella flexneri protein is 23S rRNA (uracil(1939)-C(5))-methyltransferase RlmD.